Consider the following 168-residue polypeptide: MNEVKESLRSIEQKYKLFQQQQFTFIAALEHCRENAHDKIRPISSIEQVQSYMEHYCNNSTDRRILLMFMDICSELNKLCQHFEALHSGTPVTNSLLEKCKTLVSQSNDLSILRAKYPHDVVNHLSCDEARNHYGGVVSLIPIVLDLMKEWIAHSEKLPRKVLQHGTT.

In terms of assembly, microtubule inner protein component of sperm flagellar doublet microtubules. Interacts with CABP1 and CALR. Interacts with INCA1. Interacts with microtubules. As to expression, testis-specific. Expressed in round spermatids.

Its subcellular location is the cytoplasm. It localises to the cytoplasmic vesicle. The protein localises to the secretory vesicle. It is found in the acrosome. The protein resides in the cytoskeleton. Its subcellular location is the cilium basal body. It localises to the flagellum axoneme. The protein localises to the cilium axoneme. It is found in the nucleus. Functionally, microtubule inner protein (MIP) part of the dynein-decorated doublet microtubules (DMTs) of multiciliated respiratory cells and the distal singlet microtubules of monoflagellated spermatozoa. Forms an extensive interaction network cross-linking the lumen of axonemal doublet microtubules. The chain is Sperm acrosome-associated protein 9 (Spaca9) from Rattus norvegicus (Rat).